Reading from the N-terminus, the 163-residue chain is Lipoprotein signal peptidase (163 aa).

The next 3 membrane-spanning stretches (helical) occupy residues 11–31 (ILIA…IATT), 63–83 (KMTF…YFFI), and 88–108 (YNLF…GNFI). Residues D118 and D136 contribute to the active site. Residues 131–151 (IFNIADSSLTIGVILIIIALL) form a helical membrane-spanning segment.

It belongs to the peptidase A8 family.

It localises to the cell membrane. The catalysed reaction is Release of signal peptides from bacterial membrane prolipoproteins. Hydrolyzes -Xaa-Yaa-Zaa-|-(S,diacylglyceryl)Cys-, in which Xaa is hydrophobic (preferably Leu), and Yaa (Ala or Ser) and Zaa (Gly or Ala) have small, neutral side chains.. It participates in protein modification; lipoprotein biosynthesis (signal peptide cleavage). This protein specifically catalyzes the removal of signal peptides from prolipoproteins. The protein is Lipoprotein signal peptidase of Staphylococcus aureus (strain MRSA252).